Reading from the N-terminus, the 83-residue chain is Cell division protein ZapB (83 aa).

The stretch at 7–80 forms a coiled coil; the sequence is EMLEKLEAKV…RVRTLLGKMD (74 aa).

The protein belongs to the ZapB family. As to quaternary structure, homodimer. The ends of the coiled-coil dimer bind to each other, forming polymers. Interacts with FtsZ.

It is found in the cytoplasm. Functionally, non-essential, abundant cell division factor that is required for proper Z-ring formation. It is recruited early to the divisome by direct interaction with FtsZ, stimulating Z-ring assembly and thereby promoting cell division earlier in the cell cycle. Its recruitment to the Z-ring requires functional FtsA or ZipA. The polypeptide is Cell division protein ZapB (Photobacterium profundum (strain SS9)).